The primary structure comprises 408 residues: Aminomethyltransferase, mitochondrial (408 aa).

Residues Met1–Phe30 constitute a mitochondrion transit peptide. Substrate contacts are provided by Glu235, Arg266, and Tyr404.

It belongs to the GcvT family. In terms of assembly, the glycine cleavage system is composed of four proteins: P, T, L and H.

Its subcellular location is the mitochondrion. The enzyme catalyses N(6)-[(R)-S(8)-aminomethyldihydrolipoyl]-L-lysyl-[protein] + (6S)-5,6,7,8-tetrahydrofolate = N(6)-[(R)-dihydrolipoyl]-L-lysyl-[protein] + (6R)-5,10-methylene-5,6,7,8-tetrahydrofolate + NH4(+). The glycine cleavage system catalyzes the degradation of glycine. In Pisum sativum (Garden pea), this protein is Aminomethyltransferase, mitochondrial (GDCST).